Reading from the N-terminus, the 505-residue chain is ATP synthase subunit alpha (505 aa).

Position 170 to 177 (170 to 177 (GDRQTGKT)) interacts with ATP.

Belongs to the ATPase alpha/beta chains family. As to quaternary structure, F-type ATPases have 2 components, CF(1) - the catalytic core - and CF(0) - the membrane proton channel. CF(1) has five subunits: alpha(3), beta(3), gamma(1), delta(1), epsilon(1). CF(0) has four main subunits: a(1), b(1), b'(1) and c(9-12).

The protein resides in the cellular thylakoid membrane. It catalyses the reaction ATP + H2O + 4 H(+)(in) = ADP + phosphate + 5 H(+)(out). Functionally, produces ATP from ADP in the presence of a proton gradient across the membrane. The alpha chain is a regulatory subunit. This is ATP synthase subunit alpha from Prochlorococcus marinus (strain MIT 9303).